Here is a 763-residue protein sequence, read N- to C-terminus: 5-methyltetrahydropteroyltriglutamate--homocysteine methyltransferase (763 aa).

Residues 16–19 (RELK) and K114 contribute to the 5-methyltetrahydropteroyltri-L-glutamate site. Residues 438–440 (IGS) and E491 each bind L-homocysteine. L-methionine-binding positions include 438-440 (IGS) and E491. Residues 522 to 523 (RC) and W568 contribute to the 5-methyltetrahydropteroyltri-L-glutamate site. D606 lines the L-homocysteine pocket. Residue D606 participates in L-methionine binding. Residue E612 coordinates 5-methyltetrahydropteroyltri-L-glutamate. Zn(2+) is bound by residues H648, C650, and E672. H701 functions as the Proton donor in the catalytic mechanism. Position 733 (C733) interacts with Zn(2+).

The protein belongs to the vitamin-B12 independent methionine synthase family. The cofactor is Zn(2+).

The catalysed reaction is 5-methyltetrahydropteroyltri-L-glutamate + L-homocysteine = tetrahydropteroyltri-L-glutamate + L-methionine. It participates in amino-acid biosynthesis; L-methionine biosynthesis via de novo pathway; L-methionine from L-homocysteine (MetE route): step 1/1. Catalyzes the transfer of a methyl group from 5-methyltetrahydrofolate to homocysteine resulting in methionine formation. The chain is 5-methyltetrahydropteroyltriglutamate--homocysteine methyltransferase from Parvibaculum lavamentivorans (strain DS-1 / DSM 13023 / NCIMB 13966).